The sequence spans 246 residues: MADS-box transcription factor 14 (246 aa).

The MADS-box domain maps to M1 to S61. A K-box domain is found at Q88–V178. Residues K180–F199 are disordered.

In terms of assembly, may interact with the K-box of MADS1 and MADS6. Highly expressed in sterile lemmas, at intermediate levels in stamens, and weakly in lemmas, paleas and carpels.

The protein localises to the nucleus. In terms of biological role, probable transcription factor. May be involved in the control of flowering time. This Oryza sativa subsp. japonica (Rice) protein is MADS-box transcription factor 14 (MADS14).